Here is a 966-residue protein sequence, read N- to C-terminus: Probable transport protein MmpL11 (966 aa).

Helical transmembrane passes span 13 to 33, 188 to 208, 214 to 234, 235 to 255, 279 to 299, 311 to 331, 373 to 393, 527 to 547, 557 to 577, 595 to 615, 646 to 666, and 668 to 688; these read WLVFTGWLLALVPAVYLAMTQ, IILMVLVAVFGSLAAAAIPLA, VVITMGLVFVLSMHTTMSVFV, TSTVSMFGIALAVDYSLFILM, GLAVVLSGMTVIASLTGIYLI, AILAVAVAMLTSATLTPAVLA, ALAASTVLLVMAAPATLMVLG, TQPLVLVFVAVIAFLMLLISI, VLMTLLSVAAAYGSLVMVFQW, VPPLVLAMTFGLSMDYEIFLL, AALIMIAVFCGFAFAGMPLVA, and IGVACAVAIAVDATVVRLVLV.

Belongs to the resistance-nodulation-cell division (RND) (TC 2.A.6) family. MmpL subfamily.

It is found in the cell membrane. The sequence is that of Probable transport protein MmpL11 (mmpL11) from Mycobacterium bovis (strain ATCC BAA-935 / AF2122/97).